The chain runs to 356 residues: Arginine kinase 1 (356 aa).

In terms of domain architecture, Phosphagen kinase N-terminal spans 6–91 (VLAKLEEGYA…FDPIIEDYHG (86 aa)). Residue 64–68 (GVGIY) participates in substrate binding. The Phosphagen kinase C-terminal domain maps to 119 to 356 (YVISTRVRCG…TELIKLEKSL (238 aa)). Residues 122–126 (STRVR) and His185 each bind ATP. Position 225 (Glu225) interacts with substrate. An ATP-binding site is contributed by Arg229. Substrate is bound at residue Cys271. ATP is bound by residues 280-284 (RASVH) and 309-314 (RGTRGE). Glu314 contacts substrate.

This sequence belongs to the ATP:guanido phosphotransferase family.

It catalyses the reaction L-arginine + ATP = N(omega)-phospho-L-arginine + ADP + H(+). This Drosophila melanogaster (Fruit fly) protein is Arginine kinase 1.